Here is a 162-residue protein sequence, read N- to C-terminus: MSVMYKKILYPTDFSETAEIALKHVKAFKTLKAEEVILLHVIDEREIKKRDIFSLLLGVAGLNKSVEEFENELKNKLTEEAKNKMENIKKELEDVGFKVKDIIVVGIPHEEIVKIAEDEGVDIIIMGSHGKTNLKEILLGSVTENVIKKSNKPVLVVKRKNS.

ATP is bound by residues P11, V41, 127–133, and 141–143; these read GSHGKTN and SVT.

It belongs to the universal stress protein A family. In terms of assembly, homodimer. Requires Mn(2+) as cofactor.

Its subcellular location is the cytoplasm. The polypeptide is Universal stress protein MJ0577 (Methanocaldococcus jannaschii (strain ATCC 43067 / DSM 2661 / JAL-1 / JCM 10045 / NBRC 100440) (Methanococcus jannaschii)).